Consider the following 80-residue polypeptide: NAD(P)H-quinone oxidoreductase subunit O (80 aa).

This sequence belongs to the complex I NdhO subunit family. In terms of assembly, NDH-1 can be composed of about 15 different subunits; different subcomplexes with different compositions have been identified which probably have different functions.

The protein resides in the cellular thylakoid membrane. It carries out the reaction a plastoquinone + NADH + (n+1) H(+)(in) = a plastoquinol + NAD(+) + n H(+)(out). The catalysed reaction is a plastoquinone + NADPH + (n+1) H(+)(in) = a plastoquinol + NADP(+) + n H(+)(out). In terms of biological role, NDH-1 shuttles electrons from an unknown electron donor, via FMN and iron-sulfur (Fe-S) centers, to quinones in the respiratory and/or the photosynthetic chain. The immediate electron acceptor for the enzyme in this species is believed to be plastoquinone. Couples the redox reaction to proton translocation, and thus conserves the redox energy in a proton gradient. Cyanobacterial NDH-1 also plays a role in inorganic carbon-concentration. This Prochlorococcus marinus subsp. pastoris (strain CCMP1986 / NIES-2087 / MED4) protein is NAD(P)H-quinone oxidoreductase subunit O.